We begin with the raw amino-acid sequence, 89 residues long: Small ribosomal subunit protein uS14A (89 aa).

It belongs to the universal ribosomal protein uS14 family. In terms of assembly, part of the 30S ribosomal subunit. Contacts proteins S3 and S10.

In terms of biological role, binds 16S rRNA, required for the assembly of 30S particles and may also be responsible for determining the conformation of the 16S rRNA at the A site. In Staphylococcus saprophyticus subsp. saprophyticus (strain ATCC 15305 / DSM 20229 / NCIMB 8711 / NCTC 7292 / S-41), this protein is Small ribosomal subunit protein uS14A.